We begin with the raw amino-acid sequence, 399 residues long: Secreted RxLR effector protein 36 (399 aa).

The signal sequence occupies residues methionine 1–alanine 21. The RxLR-dEER motif lies at arginine 50–arginine 71. N-linked (GlcNAc...) asparagine glycosylation is present at asparagine 75. Residues isoleucine 126 to aspartate 145 form a disordered region.

This sequence belongs to the RxLR effector family.

It localises to the secreted. The protein localises to the host nucleus. Functionally, secreted effector that completely suppresses the host cell death induced by cell death-inducing proteins. This is Secreted RxLR effector protein 36 from Plasmopara viticola (Downy mildew of grapevine).